Consider the following 162-residue polypeptide: NADH-quinone oxidoreductase subunit I (162 aa).

4Fe-4S ferredoxin-type domains lie at 52-82 (LRRY…IEAG) and 93-122 (TRYD…EGPN). 8 residues coordinate [4Fe-4S] cluster: Cys62, Cys65, Cys68, Cys72, Cys102, Cys105, Cys108, and Cys112.

This sequence belongs to the complex I 23 kDa subunit family. In terms of assembly, NDH-1 is composed of 14 different subunits. Subunits NuoA, H, J, K, L, M, N constitute the membrane sector of the complex. Requires [4Fe-4S] cluster as cofactor.

Its subcellular location is the cell inner membrane. The enzyme catalyses a quinone + NADH + 5 H(+)(in) = a quinol + NAD(+) + 4 H(+)(out). In terms of biological role, NDH-1 shuttles electrons from NADH, via FMN and iron-sulfur (Fe-S) centers, to quinones in the respiratory chain. The immediate electron acceptor for the enzyme in this species is believed to be ubiquinone. Couples the redox reaction to proton translocation (for every two electrons transferred, four hydrogen ions are translocated across the cytoplasmic membrane), and thus conserves the redox energy in a proton gradient. This chain is NADH-quinone oxidoreductase subunit I, found in Methylorubrum populi (strain ATCC BAA-705 / NCIMB 13946 / BJ001) (Methylobacterium populi).